The primary structure comprises 436 residues: MAKKMKLSDITNMFVGMDVEALEGVTIEGDIEIDLGGLGGGFDPMLAAALGQESAVLAQHFARLAGMFGYPVGFGGAAAPAISPALAAPKLKDLIPAKFDVANIAEWTTEIQEVPIGNTSADGGSRGKRVLVGGEKALPFYFDAPMPNRNQVTIDVFDMRIGLAKAVKENYDEVMDSPGEWAKKNVEKFNADMITIHLISTDPLIKDTPAKEAAKTVEEVLQAVDVPIAIGGSGNPQKDPEVLAKAAEVAEGERCLLASASLNLDYAAIAEAALKYDHDVLSWTQLDMNAQKELNRKLMKQCNVPRDRIIMDPTTAALGYGLDYAYTNMERIRLAALMGDDELTFPMSSGTTNAWGARESWMVGSPLSQDTDWGPREYRGPIWEIVTGLSLAIAGNDLFMMMHPTSVAVLKQITQTLFGSIEAEPVDITNWIGAEV.

Belongs to the CdhD family. Heterodimer of delta and gamma chains. The ACDS complex is made up of alpha, epsilon, beta, gamma and delta chains with a probable stoichiometry of (alpha(2)epsilon(2))(4)-beta(8)-(gamma(1)delta(1))(8) (Potential).

Its pathway is one-carbon metabolism; methanogenesis from acetate. Part of a complex that catalyzes the reversible cleavage of acetyl-CoA, allowing growth on acetate as sole source of carbon and energy. Probably maintains the overall quaternary structure of the ACDS complex. This chain is Acetyl-CoA decarbonylase/synthase complex subunit delta 1 (cdhD1), found in Methanosarcina thermophila.